The following is a 145-amino-acid chain: Maximins 3/H9 type 1 (145 aa).

The N-terminal stretch at 1-18 is a signal peptide; it reads MNFKYIVAVSFLIASAYA. 2 propeptides span residues 19 to 43 and 74 to 124; these read RSVQ…LREI and RTAE…KEKR. I144 bears the Isoleucine amide mark.

This sequence belongs to the bombinin family. In terms of tissue distribution, expressed by the skin glands.

Its subcellular location is the secreted. In terms of biological role, maximin-3 shows antibacterial activity against both Gram-positive and Gram-negative bacteria. It also shows antimicrobial activity against the fungus C.albicans, but not against A.flavus nor P.uticale. It has little hemolytic activity. It possess a significant cytotoxicity against tumor cell lines. It possess a significant anti-HIV activity. It shows high spermicidal activity. Functionally, maximin-H9 shows antimicrobial activity against bacteria and against the fungus C.albicans. Shows strong hemolytic activity. In Bombina maxima (Giant fire-bellied toad), this protein is Maximins 3/H9 type 1.